The sequence spans 438 residues: Fibrinogen gamma chain (438 aa).

The signal sequence occupies residues 1–25 (MTRLPKQGLLLLQSLALLSSAFGNI). The N-linked (GlcNAc...) asparagine glycan is linked to N76. The Fibrinogen C-terminal domain occupies 167–414 (QIQEFTGKDC…SVTMKIMPLN (248 aa)). C176 and C205 are disulfide-bonded. Residues D341, D343, and G347 each contribute to the Ca(2+) site. An intrachain disulfide couples C349 to C362.

Heterohexamer; disulfide linked. Contains 2 sets of 3 non-identical chains (alpha, beta and gamma). The 2 heterotrimers are in head to head conformation with the N-termini in a small central domain. Post-translationally, conversion of fibrinogen to fibrin is triggered by thrombin, which cleaves fibrinopeptides A and B from alpha and beta chains, and thus exposes the N-terminal polymerization sites responsible for the formation of the soft clot. The soft clot is converted into the hard clot by factor XIIIA which catalyzes the epsilon-(gamma-glutamyl)lysine cross-linking between gamma chains (stronger) and between alpha chains (weaker) of different monomers.

It localises to the secreted. In terms of biological role, together with fibrinogen alpha (FGA) and fibrinogen beta (FGB), polymerizes to form an insoluble fibrin matrix. Has a major function in hemostasis as one of the primary components of blood clots. This is Fibrinogen gamma chain (fgg) from Xenopus laevis (African clawed frog).